A 238-amino-acid polypeptide reads, in one-letter code: Nuclear transcription factor Y subunit B-9 (238 aa).

The DNA-binding element occupies 64–70 (MPIANVI). The segment at 91-102 (IQECVSEYISFV) is subunit association domain (SAD). A disordered region spans residues 203-238 (RYYQNGSSGQDESSVGGGSSSSINGMPAFDHYGQYK). Residues 208-227 (GSSGQDESSVGGGSSSSING) are compositionally biased toward low complexity.

Belongs to the NFYB/HAP3 subunit family. Heterotrimeric transcription factor composed of three components, NF-YA, NF-YB and NF-YC. NF-YB and NF-YC must interact and dimerize for NF-YA association and DNA binding. Interacts with PRN1. As to expression, expressed in green siliques. Present in etiolated seedlings.

The protein localises to the nucleus. Component of the NF-Y/HAP transcription factor complex. The NF-Y complex stimulates the transcription of various genes by recognizing and binding to a CCAAT motif in promoters. Acts as a central regulator of the embryogenesis. Required for the speciation of cotyledon identity and the completion of embryo maturation. Controls seed storage protein genes through the regulation of FUS3 and ABI3. Involved in the blue light (BL) and abscisic acid (ABA) signaling pathways. The polypeptide is Nuclear transcription factor Y subunit B-9 (NFYB9) (Arabidopsis thaliana (Mouse-ear cress)).